The primary structure comprises 645 residues: DNA mismatch repair protein MutL (645 aa).

The protein belongs to the DNA mismatch repair MutL/HexB family.

Functionally, this protein is involved in the repair of mismatches in DNA. It is required for dam-dependent methyl-directed DNA mismatch repair. May act as a 'molecular matchmaker', a protein that promotes the formation of a stable complex between two or more DNA-binding proteins in an ATP-dependent manner without itself being part of a final effector complex. This Pediococcus pentosaceus (strain ATCC 25745 / CCUG 21536 / LMG 10740 / 183-1w) protein is DNA mismatch repair protein MutL.